The following is a 219-amino-acid chain: Uracil-DNA glycosylase (219 aa).

Aspartate 61 functions as the Proton acceptor in the catalytic mechanism.

The protein belongs to the uracil-DNA glycosylase (UDG) superfamily. UNG family.

Its subcellular location is the cytoplasm. It catalyses the reaction Hydrolyzes single-stranded DNA or mismatched double-stranded DNA and polynucleotides, releasing free uracil.. Excises uracil residues from the DNA which can arise as a result of misincorporation of dUMP residues by DNA polymerase or due to deamination of cytosine. The sequence is that of Uracil-DNA glycosylase from Haemophilus influenzae (strain PittEE).